Consider the following 297-residue polypeptide: tRNA dimethylallyltransferase (297 aa).

9–16 (GPTASGKS) contributes to the ATP binding site. A substrate-binding site is contributed by 11 to 16 (TASGKS). Interaction with substrate tRNA regions lie at residues 34 to 37 (DSMQ) and 155 to 159 (QRVIR).

This sequence belongs to the IPP transferase family. As to quaternary structure, monomer. It depends on Mg(2+) as a cofactor.

The enzyme catalyses adenosine(37) in tRNA + dimethylallyl diphosphate = N(6)-dimethylallyladenosine(37) in tRNA + diphosphate. Catalyzes the transfer of a dimethylallyl group onto the adenine at position 37 in tRNAs that read codons beginning with uridine, leading to the formation of N6-(dimethylallyl)adenosine (i(6)A). In Leuconostoc mesenteroides subsp. mesenteroides (strain ATCC 8293 / DSM 20343 / BCRC 11652 / CCM 1803 / JCM 6124 / NCDO 523 / NBRC 100496 / NCIMB 8023 / NCTC 12954 / NRRL B-1118 / 37Y), this protein is tRNA dimethylallyltransferase.